The primary structure comprises 411 residues: MATINDNYLKLKAGYLFPEIARRVNAFAEAHPEAKIIKLGIGDVTEPLPQACRQAMIKAVEEMGDRATFKGYGPEQGYNWLREKIAQNDFQARGCDIDASEIFISDGSKCDTGNILDIFGKNNTIAVTDPVYPVYVDTNVMAGHTGDANDKGEYLGLVYLPMTANNNFTPELPSQKVDLIYLCFPNNPTGATATKENLTKWVNYAKENGSIIFFDAAYEAFITDPSLPHSIYEIEGARDCAIEFRSFSKNAGFTGTRCALTVVPKTLKAKASDGSEVELWKLWNRRQSTKFNGVSYIVQRGAEAVYSEEGQAQVKALVNFYLENAKIICDKLSFAGLTVYGGVNAPYVWVKTPDGLSSWDFFDKLLQSANVVGTPGSGFGAAGEGYFRISAFNSRENVEEATRRIIEKLTV.

Substrate contacts are provided by Y15 and G42. Pyridoxal 5'-phosphate contacts are provided by residues Y72, 108–109, Y132, N187, Y218, and 246–248; these read SK and SFS. Positions 109, 132, and 187 each coordinate substrate. K249 bears the N6-(pyridoxal phosphate)lysine mark. 2 residues coordinate pyridoxal 5'-phosphate: R257 and N292. Residues N292 and R388 each contribute to the substrate site.

This sequence belongs to the class-I pyridoxal-phosphate-dependent aminotransferase family. LL-diaminopimelate aminotransferase subfamily. As to quaternary structure, homodimer. The cofactor is pyridoxal 5'-phosphate.

It carries out the reaction (2S,6S)-2,6-diaminopimelate + 2-oxoglutarate = (S)-2,3,4,5-tetrahydrodipicolinate + L-glutamate + H2O + H(+). It participates in amino-acid biosynthesis; L-lysine biosynthesis via DAP pathway; LL-2,6-diaminopimelate from (S)-tetrahydrodipicolinate (aminotransferase route): step 1/1. Its function is as follows. Involved in the synthesis of meso-diaminopimelate (m-DAP or DL-DAP), required for both lysine and peptidoglycan biosynthesis. Catalyzes the direct conversion of tetrahydrodipicolinate to LL-diaminopimelate. The polypeptide is LL-diaminopimelate aminotransferase (Gloeothece citriformis (strain PCC 7424) (Cyanothece sp. (strain PCC 7424))).